The sequence spans 432 residues: 5-hydroxybenzimidazole synthase BzaA (432 aa).

Substrate contacts are provided by residues Met-95, Tyr-124, His-163, 185–187 (SYG), and 226–229 (DGMR). His-269 contributes to the Zn(2+) binding site. Residue Phe-292 coordinates substrate. Zn(2+) is bound at residue His-333. Cys-409, Cys-412, and Cys-416 together coordinate [4Fe-4S] cluster.

This sequence belongs to the ThiC family. 5-hydroxybenzimidazole synthase subfamily. It depends on [4Fe-4S] cluster as a cofactor.

It catalyses the reaction 5-amino-1-(5-phospho-beta-D-ribosyl)imidazole + AH2 + S-adenosyl-L-methionine = 5-hydroxybenzimidazole + 5'-deoxyadenosine + formate + L-methionine + A + NH4(+) + phosphate + 2 H(+). Its function is as follows. Together with BzaB, probably catalyzes the conversion of aminoimidazole ribotide (AIR) to 5-hydroxybenzimidazole (5-HBI) in a radical S-adenosyl-L-methionine (SAM)-dependent reaction. Is thus involved in the anaerobic biosynthesis of the benzimidazole lower axial ligand of the cobamide produced by M.thermoacetica. Requires BzaB for catalytic activity, as BzaA alone displays no activity. The protein is 5-hydroxybenzimidazole synthase BzaA of Moorella thermoacetica (strain ATCC 39073 / JCM 9320).